We begin with the raw amino-acid sequence, 465 residues long: GTPase Der (465 aa).

2 consecutive EngA-type G domains span residues 3 to 166 (FLVA…LNEY) and 184 to 358 (IHFS…ACAN). GTP is bound by residues 9-16 (GRANVGKS), 56-60 (DTGGI), 118-121 (NKVD), 190-197 (GRPNVGKS), 237-241 (DTAGV), and 302-305 (NKWD). The 85-residue stretch at 359 to 443 (KKITTADATR…PIVFEFKQSE (85 aa)) folds into the KH-like domain. Residues 446 to 465 (FADRKNKRSKDEGSKSKKVK) are disordered.

This sequence belongs to the TRAFAC class TrmE-Era-EngA-EngB-Septin-like GTPase superfamily. EngA (Der) GTPase family. Associates with the 50S ribosomal subunit.

Functionally, GTPase that plays an essential role in the late steps of ribosome biogenesis. The sequence is that of GTPase Der from Francisella tularensis subsp. holarctica (strain FTNF002-00 / FTA).